The sequence spans 37 residues: uncharacterized protein (37 aa).

This sequence belongs to the poxviridae A56.5 protein family.

This is an uncharacterized protein from Vaccinia virus (strain Western Reserve) (VACV).